The sequence spans 251 residues: ATP synthase subunit a (251 aa).

5 consecutive transmembrane segments (helical) span residues 14-34 (GFVK…LLAV), 78-98 (YLPF…FAVF), 107-127 (SLST…FYGI), 174-194 (MILA…MGVL), and 196-216 (LLIG…YIAA). A disordered region spans residues 224–251 (NAGASDDEGGEDAKSACAAGGKICKHKP).

The protein belongs to the ATPase A chain family. F-type ATPases have 2 components, CF(1) - the catalytic core - and CF(0) - the membrane proton channel. CF(1) has five subunits: alpha(3), beta(3), gamma(1), delta(1), epsilon(1). CF(0) has three main subunits: a(1), b(2) and c(9-12). The alpha and beta chains form an alternating ring which encloses part of the gamma chain. CF(1) is attached to CF(0) by a central stalk formed by the gamma and epsilon chains, while a peripheral stalk is formed by the delta and b chains.

It is found in the cell inner membrane. Key component of the proton channel; it plays a direct role in the translocation of protons across the membrane. This Nitrosospira multiformis (strain ATCC 25196 / NCIMB 11849 / C 71) protein is ATP synthase subunit a.